The following is a 317-amino-acid chain: Apolipoprotein E (317 aa).

Positions Met-1–Ala-18 are cleaved as a signal peptide. 8 tandem repeats follow at residues Ala-80 to Thr-101, Pro-102 to Gly-123, Ala-124 to Gly-145, Gln-146 to Leu-167, Arg-168 to Glu-189, Arg-190 to Ala-211, Thr-212 to Arg-233, and Ala-234 to Ala-255. The segment at Ala-80–Ala-255 is 8 X 22 AA approximate tandem repeats. Methionine sulfoxide is present on Met-143. At Ser-147 the chain carries Phosphoserine. Residues His-158 to Arg-168 form an LDL and other lipoprotein receptors binding region. Leu-162–Arg-165 is a heparin binding site. The segment at Ala-210–Met-290 is lipid-binding and lipoprotein association. Gly-229 to Met-236 serves as a coordination point for heparin. Positions Gln-266–His-317 are homooligomerization. The interval Arg-278–Met-290 is specificity for association with VLDL.

The protein belongs to the apolipoprotein A1/A4/E family. Homotetramer. May interact with ABCA1; functionally associated with ABCA1 in the biogenesis of HDLs. May interact with APP/A4 amyloid-beta peptide; the interaction is extremely stable in vitro but its physiological significance is unclear. May interact with MAPT. May interact with MAP2. In the cerebrospinal fluid, interacts with secreted SORL1. Interacts with PMEL; this allows the loading of PMEL luminal fragment on ILVs to induce fibril nucleation. In terms of processing, APOE exists as multiple glycosylated and sialylated glycoforms within cells and in plasma. The extent of glycosylation and sialylation are tissue and context specific. Glycated in plasma VLDL. Post-translationally, phosphorylated by FAM20C in the extracellular medium.

The protein resides in the secreted. It is found in the extracellular space. Its subcellular location is the extracellular matrix. The protein localises to the extracellular vesicle. It localises to the endosome. The protein resides in the multivesicular body. In terms of biological role, APOE is an apolipoprotein, a protein associating with lipid particles, that mainly functions in lipoprotein-mediated lipid transport between organs via the plasma and interstitial fluids. APOE is a core component of plasma lipoproteins and is involved in their production, conversion and clearance. Apolipoproteins are amphipathic molecules that interact both with lipids of the lipoprotein particle core and the aqueous environment of the plasma. As such, APOE associates with chylomicrons, chylomicron remnants, very low density lipoproteins (VLDL) and intermediate density lipoproteins (IDL) but shows a preferential binding to high-density lipoproteins (HDL). It also binds a wide range of cellular receptors including the LDL receptor/LDLR, the LDL receptor-related proteins LRP1, LRP2 and LRP8 and the very low-density lipoprotein receptor/VLDLR that mediate the cellular uptake of the APOE-containing lipoprotein particles. Finally, APOE also has a heparin-binding activity and binds heparan-sulfate proteoglycans on the surface of cells, a property that supports the capture and the receptor-mediated uptake of APOE-containing lipoproteins by cells. A main function of APOE is to mediate lipoprotein clearance through the uptake of chylomicrons, VLDLs, and HDLs by hepatocytes. APOE is also involved in the biosynthesis by the liver of VLDLs as well as their uptake by peripheral tissues ensuring the delivery of triglycerides and energy storage in muscle, heart and adipose tissues. By participating in the lipoprotein-mediated distribution of lipids among tissues, APOE plays a critical role in plasma and tissues lipid homeostasis. APOE is also involved in two steps of reverse cholesterol transport, the HDLs-mediated transport of cholesterol from peripheral tissues to the liver, and thereby plays an important role in cholesterol homeostasis. First, it is functionally associated with ABCA1 in the biogenesis of HDLs in tissues. Second, it is enriched in circulating HDLs and mediates their uptake by hepatocytes. APOE also plays an important role in lipid transport in the central nervous system, regulating neuron survival and sprouting. The polypeptide is Apolipoprotein E (APOE) (Pongo pygmaeus (Bornean orangutan)).